We begin with the raw amino-acid sequence, 430 residues long: Enolase (430 aa).

Gln166 contributes to the (2R)-2-phosphoglycerate binding site. Glu208 functions as the Proton donor in the catalytic mechanism. Asp245, Glu288, and Asp315 together coordinate Mg(2+). Positions 340, 369, 370, and 391 each coordinate (2R)-2-phosphoglycerate. Lys340 serves as the catalytic Proton acceptor.

This sequence belongs to the enolase family. It depends on Mg(2+) as a cofactor.

The protein localises to the cytoplasm. It localises to the secreted. It is found in the cell surface. The enzyme catalyses (2R)-2-phosphoglycerate = phosphoenolpyruvate + H2O. It participates in carbohydrate degradation; glycolysis; pyruvate from D-glyceraldehyde 3-phosphate: step 4/5. Its function is as follows. Catalyzes the reversible conversion of 2-phosphoglycerate (2-PG) into phosphoenolpyruvate (PEP). It is essential for the degradation of carbohydrates via glycolysis. This chain is Enolase, found in Clostridium beijerinckii (strain ATCC 51743 / NCIMB 8052) (Clostridium acetobutylicum).